The primary structure comprises 511 residues: Glucans biosynthesis protein G (511 aa).

The N-terminal stretch at 1 to 22 (MMKMRWLGAAIMLTLYASSSWA) is a signal peptide.

This sequence belongs to the OpgD/OpgG family.

The protein resides in the periplasm. Its pathway is glycan metabolism; osmoregulated periplasmic glucan (OPG) biosynthesis. Involved in the biosynthesis of osmoregulated periplasmic glucans (OPGs). This Salmonella enteritidis PT4 (strain P125109) protein is Glucans biosynthesis protein G.